A 20-amino-acid polypeptide reads, in one-letter code: 39 kDa major outer membrane protein (20 aa).

It is found in the cell outer membrane. The sequence is that of 39 kDa major outer membrane protein from Aggregatibacter actinomycetemcomitans (Actinobacillus actinomycetemcomitans).